Reading from the N-terminus, the 131-residue chain is Small ribosomal subunit protein uS8 (131 aa).

The protein belongs to the universal ribosomal protein uS8 family. Part of the 30S ribosomal subunit. Contacts proteins S5 and S12.

One of the primary rRNA binding proteins, it binds directly to 16S rRNA central domain where it helps coordinate assembly of the platform of the 30S subunit. The polypeptide is Small ribosomal subunit protein uS8 (Methylobacillus flagellatus (strain ATCC 51484 / DSM 6875 / VKM B-1610 / KT)).